The chain runs to 263 residues: Endonuclease 8 (263 aa).

P2 functions as the Schiff-base intermediate with DNA in the catalytic mechanism. The active-site Proton donor is E3. The active-site Proton donor; for beta-elimination activity is the K53. The DNA site is built by Q70, R125, and N169. Residues 229–263 (KVFHREGKACERCGGVIERSTLSSRPFYGCPVCQK) form an FPG-type zinc finger. R253 functions as the Proton donor; for delta-elimination activity in the catalytic mechanism.

This sequence belongs to the FPG family. The cofactor is Zn(2+).

It carries out the reaction 2'-deoxyribonucleotide-(2'-deoxyribose 5'-phosphate)-2'-deoxyribonucleotide-DNA = a 3'-end 2'-deoxyribonucleotide-(2,3-dehydro-2,3-deoxyribose 5'-phosphate)-DNA + a 5'-end 5'-phospho-2'-deoxyribonucleoside-DNA + H(+). Its function is as follows. Involved in base excision repair of DNA damaged by oxidation or by mutagenic agents. Acts as a DNA glycosylase that recognizes and removes damaged bases. Has a preference for oxidized pyrimidines, such as thymine glycol, 5,6-dihydrouracil and 5,6-dihydrothymine. Has AP (apurinic/apyrimidinic) lyase activity and introduces nicks in the DNA strand. Cleaves the DNA backbone by beta-delta elimination to generate a single-strand break at the site of the removed base with both 3'- and 5'-phosphates. The chain is Endonuclease 8 from Enterobacter sp. (strain 638).